Here is a 530-residue protein sequence, read N- to C-terminus: DNA damage-binding protein cmr1 (530 aa).

2 disordered regions span residues 34–115 (VGLF…RKSD) and 224–250 (TKPVSAATHDEDEEDDDDDPDPVLTTL). The segment covering 52 to 62 (AKKKKPAPKKV) has biased composition (basic residues). Residues 89–108 (EVAKRKADEHDAALQEAERA) are compositionally biased toward basic and acidic residues. A WD 1 repeat occupies 188 to 229 (LTPERIYAMTFHPSESKPLIFAGDKMGHLGVLDASQTKPVSA). Residues 233-244 (DEDEEDDDDDPD) are compositionally biased toward acidic residues. WD repeat units follow at residues 252–292 (PHTR…SVER), 302–339 (VPISGLDMALDDPHCLYWTTLDGEFGRYDMRTPRQDSA), 344–384 (LSDK…HKSP), 389–430 (EHES…ASWK), 453–496 (GRWV…LAQL), and 499–530 (DGITAVPAVAVFHRSKNWVAGGTASGKICLWM).

The protein belongs to the WD repeat DDB2/WDR76 family.

In terms of biological role, DNA-binding protein that binds to both single- and double-stranded DNA. Binds preferentially to UV-damaged DNA. May be involved in DNA-metabolic processes. The chain is DNA damage-binding protein cmr1 from Aspergillus terreus (strain NIH 2624 / FGSC A1156).